A 542-amino-acid chain; its full sequence is Chaperonin GroEL 2 (542 aa).

ATP contacts are provided by residues Thr-29–Pro-32, Asp-86–Thr-90, Gly-413, Asn-477–Ala-479, and Asp-493.

This sequence belongs to the chaperonin (HSP60) family. In terms of assembly, forms a cylinder of 14 subunits composed of two heptameric rings stacked back-to-back. Interacts with the co-chaperonin GroES.

The protein localises to the cytoplasm. The catalysed reaction is ATP + H2O + a folded polypeptide = ADP + phosphate + an unfolded polypeptide.. Its function is as follows. Together with its co-chaperonin GroES, plays an essential role in assisting protein folding. The GroEL-GroES system forms a nano-cage that allows encapsulation of the non-native substrate proteins and provides a physical environment optimized to promote and accelerate protein folding. The sequence is that of Chaperonin GroEL 2 from Kineococcus radiotolerans (strain ATCC BAA-149 / DSM 14245 / SRS30216).